A 288-amino-acid polypeptide reads, in one-letter code: Sulfur carrier protein FdhD (288 aa).

The active-site Cysteine persulfide intermediate is the C122. 268 to 273 serves as a coordination point for Mo-bis(molybdopterin guanine dinucleotide); that stretch reads FVRGER.

It belongs to the FdhD family.

It is found in the cytoplasm. Required for formate dehydrogenase (FDH) activity. Acts as a sulfur carrier protein that transfers sulfur from IscS to the molybdenum cofactor prior to its insertion into FDH. The polypeptide is Sulfur carrier protein FdhD (Anaeromyxobacter sp. (strain K)).